The chain runs to 1477 residues: Alpha-1-inhibitor 3 (1477 aa).

The signal sequence occupies residues 1-24; sequence MKKDREAQLCLFSALLAFLPFASL. A disulfide bridge connects residues Cys-48 and Cys-86. Asn-55 and Asn-247 each carry an N-linked (GlcNAc...) asparagine glycan. 2 disulfide bridges follow: Cys-251–Cys-295 and Cys-269–Cys-283. N-linked (GlcNAc...) asparagine glycosylation is found at Asn-301, Asn-321, Asn-393, and Asn-508. 3 disulfides stabilise this stretch: Cys-468–Cys-563, Cys-595–Cys-774, and Cys-643–Cys-678. The segment at 601–750 is bait region (approximate); the sequence is DQSVLLQKPE…TWIWDLVTVN (150 aa). Asn-750, Asn-777, and Asn-872 each carry an N-linked (GlcNAc...) asparagine glycan. Cystine bridges form between Cys-850–Cys-886, Cys-924–Cys-1324, Cys-1082–Cys-1130, and Cys-1355–Cys-1470. A cross-link (isoglutamyl cysteine thioester (Cys-Gln)) is located at residues 975 to 978; it reads CGEQ. The N-linked (GlcNAc...) asparagine glycan is linked to Asn-994. N-linked (GlcNAc...) asparagine glycosylation is found at Asn-1143, Asn-1314, and Asn-1427.

Belongs to the protease inhibitor I39 (alpha-2-macroglobulin) family. As to quaternary structure, monomer.

It localises to the secreted. Functionally, protease inhibitor with a wide spectrum of protein targets, which attaches through its thioester function. In Rattus norvegicus (Rat), this protein is Alpha-1-inhibitor 3 (A1i3).